Consider the following 321-residue polypeptide: Outer envelope protein 36, chloroplastic (321 aa).

It belongs to the OEP80 (TC 1.B.33.2) family. In terms of tissue distribution, expressed in germinating seeds.

The protein resides in the plastid. Its subcellular location is the chloroplast outer membrane. Its function is as follows. May play a role during plastid development. The chain is Outer envelope protein 36, chloroplastic from Arabidopsis thaliana (Mouse-ear cress).